The following is a 426-amino-acid chain: Histidine--tRNA ligase (426 aa).

Belongs to the class-II aminoacyl-tRNA synthetase family. Homodimer.

The protein localises to the cytoplasm. It catalyses the reaction tRNA(His) + L-histidine + ATP = L-histidyl-tRNA(His) + AMP + diphosphate + H(+). The chain is Histidine--tRNA ligase from Lactiplantibacillus plantarum (strain ATCC BAA-793 / NCIMB 8826 / WCFS1) (Lactobacillus plantarum).